We begin with the raw amino-acid sequence, 387 residues long: Mitogen-activated protein kinase homolog MMK1 (387 aa).

Residues 55 to 340 (KPPIMPIGKG…VEDALAHPYL (286 aa)) enclose the Protein kinase domain. ATP is bound by residues 61–69 (IGKGAYGIV) and lysine 84. Aspartate 181 functions as the Proton acceptor in the catalytic mechanism. Phosphothreonine is present on threonine 213. Residues 213 to 215 (TEY) carry the TXY motif. The residue at position 215 (tyrosine 215) is a Phosphotyrosine.

Belongs to the protein kinase superfamily. CMGC Ser/Thr protein kinase family. MAP kinase subfamily. Mg(2+) serves as cofactor. Post-translationally, dually phosphorylated on Thr-213 and Tyr-215, which activates the enzyme. Autophosphorylated. Roots and stems.

The enzyme catalyses L-seryl-[protein] + ATP = O-phospho-L-seryl-[protein] + ADP + H(+). It catalyses the reaction L-threonyl-[protein] + ATP = O-phospho-L-threonyl-[protein] + ADP + H(+). Activated by tyrosine and threonine phosphorylation. May play a role in the mitogenic induction of symbiotic root nodules on Alfalfa by Rhizobium signal molecules. The protein is Mitogen-activated protein kinase homolog MMK1 (MMK1) of Medicago sativa (Alfalfa).